A 353-amino-acid chain; its full sequence is Rhodopsin (353 aa).

Residues 1-36 (MNGTEGPYFYIPMVNTTGIVRSPYEYPQYYLVNPAA) are Extracellular-facing. Asparagine 2 and asparagine 15 each carry an N-linked (GlcNAc...) asparagine glycan. A helical membrane pass occupies residues 37-61 (YAALGAYMFLLILVGFPVNFLTLYV). Residues 62-73 (TLEHKKLRTPLN) are Cytoplasmic-facing. A helical membrane pass occupies residues 74-96 (YILLNLAVADLFMVLGGFTTTMY). Over 97 to 110 (TSMHGYFVLGRLGC) the chain is Extracellular. A disulfide bond links cysteine 110 and cysteine 187. A helical transmembrane segment spans residues 111–133 (NVEGFFATLGGEIALWSLVVLAI). Residues 134–136 (ERW) carry the 'Ionic lock' involved in activated form stabilization motif. Residues 134-152 (ERWVVVCKPISNFRFSEDH) are Cytoplasmic-facing. Residues 153 to 173 (AIMGLAFTWVMASACAVPPLV) traverse the membrane as a helical segment. Topologically, residues 174 to 202 (GWSRYIPEGMQCSCGIDYYTRAEGFNNES) are extracellular. Asparagine 200 carries N-linked (GlcNAc...) asparagine glycosylation. A helical transmembrane segment spans residues 203 to 224 (FVIYMFVCHFLIPLVVVFFCYG). The Cytoplasmic portion of the chain corresponds to 225–252 (RLLCAVKEAAAAQQESETTQRAEREVSR). Residues 253–274 (MVVIMVVAFLVCWCPYAGVAWY) form a helical membrane-spanning segment. Over 275 to 286 (IFTHQGSEFGPL) the chain is Extracellular. A helical transmembrane segment spans residues 287–308 (FMTFPAFFAKSSSIYNPMIYIC). Lysine 296 is subject to N6-(retinylidene)lysine. The Cytoplasmic segment spans residues 309–353 (MNKQFRHCMITTLCCGKNPFEEEEGASTTSKTEASSVSSSSVSPA). Residues cysteine 322 and cysteine 323 are each lipidated (S-palmitoyl cysteine). The segment at 330-353 (EEEGASTTSKTEASSVSSSSVSPA) is disordered. Residues 334 to 353 (ASTTSKTEASSVSSSSVSPA) are compositionally biased toward low complexity.

The protein belongs to the G-protein coupled receptor 1 family. Opsin subfamily. In terms of processing, phosphorylated on some or all of the serine and threonine residues present in the C-terminal region. Contains one covalently linked retinal chromophore.

The protein localises to the membrane. It is found in the cell projection. Its subcellular location is the cilium. It localises to the photoreceptor outer segment. Its function is as follows. Photoreceptor required for image-forming vision at low light intensity. While most salt water fish species use retinal as chromophore, most freshwater fish use 3-dehydroretinal, or a mixture of retinal and 3-dehydroretinal. Light-induced isomerization of 11-cis to all-trans retinal triggers a conformational change that activates signaling via G-proteins. Subsequent receptor phosphorylation mediates displacement of the bound G-protein alpha subunit by arrestin and terminates signaling. The sequence is that of Rhodopsin (rho) from Chelon labrosus (Thicklip grey mullet).